The sequence spans 293 residues: Pyridoxal 5'-phosphate synthase subunit PdxS (293 aa).

Residue D23 participates in D-ribose 5-phosphate binding. K80 acts as the Schiff-base intermediate with D-ribose 5-phosphate in catalysis. G152 lines the D-ribose 5-phosphate pocket. R164 is a D-glyceraldehyde 3-phosphate binding site. Residues G213 and 234 to 235 (GS) each bind D-ribose 5-phosphate.

This sequence belongs to the PdxS/SNZ family. In the presence of PdxT, forms a dodecamer of heterodimers.

The catalysed reaction is aldehydo-D-ribose 5-phosphate + D-glyceraldehyde 3-phosphate + L-glutamine = pyridoxal 5'-phosphate + L-glutamate + phosphate + 3 H2O + H(+). It functions in the pathway cofactor biosynthesis; pyridoxal 5'-phosphate biosynthesis. Catalyzes the formation of pyridoxal 5'-phosphate from ribose 5-phosphate (RBP), glyceraldehyde 3-phosphate (G3P) and ammonia. The ammonia is provided by the PdxT subunit. Can also use ribulose 5-phosphate and dihydroxyacetone phosphate as substrates, resulting from enzyme-catalyzed isomerization of RBP and G3P, respectively. The sequence is that of Pyridoxal 5'-phosphate synthase subunit PdxS from Roseiflexus sp. (strain RS-1).